Reading from the N-terminus, the 811-residue chain is Probable disease resistance protein At5g04720 (811 aa).

Residues 1 to 147 (MADIIGGEVV…KVDSLNEKLG (147 aa)) enclose the RPW8 domain. NB-ARC domains are found at residues 180–242 (VGLD…VSQS) and 312–437 (TYDV…NVLV). 207–214 (GMSGSGKT) contributes to the ATP binding site. 5 LRR repeats span residues 650-674 (FPKL…ICGI), 676-699 (SLNS…SKLK), 700-722 (ALQL…ICEL), 724-746 (RLKY…IGKV), and 748-769 (TLEK…VVLL).

The protein belongs to the disease resistance NB-LRR family.

Its function is as follows. Probable disease resistance protein. The polypeptide is Probable disease resistance protein At5g04720 (Arabidopsis thaliana (Mouse-ear cress)).